A 206-amino-acid polypeptide reads, in one-letter code: dITP/XTP pyrophosphatase (206 aa).

7–12 (SSHGYK) is a binding site for substrate. D70 functions as the Proton acceptor in the catalytic mechanism. D70 contacts Mg(2+). Substrate is bound by residues T71, 154–157 (FGYD), K177, and 182–183 (HR).

It belongs to the HAM1 NTPase family. Homodimer. It depends on Mg(2+) as a cofactor.

The enzyme catalyses XTP + H2O = XMP + diphosphate + H(+). It catalyses the reaction dITP + H2O = dIMP + diphosphate + H(+). The catalysed reaction is ITP + H2O = IMP + diphosphate + H(+). In terms of biological role, pyrophosphatase that catalyzes the hydrolysis of nucleoside triphosphates to their monophosphate derivatives, with a high preference for the non-canonical purine nucleotides XTP (xanthosine triphosphate), dITP (deoxyinosine triphosphate) and ITP. Seems to function as a house-cleaning enzyme that removes non-canonical purine nucleotides from the nucleotide pool, thus preventing their incorporation into DNA/RNA and avoiding chromosomal lesions. The chain is dITP/XTP pyrophosphatase from Chlamydia abortus (strain DSM 27085 / S26/3) (Chlamydophila abortus).